The chain runs to 424 residues: Ubiquitin carboxyl-terminal hydrolase 12/46 homolog (424 aa).

One can recognise a USP domain in the interval 24–421; the sequence is FGLVNFGNTC…TGYILFYQSR (398 aa). Catalysis depends on Cys33, which acts as the Nucleophile. The interval 131 to 189 is disordered; the sequence is NAGPSNGNPKATNQGGSTSAMASSIASKSSSTSNSNSNSNSTTNSNGNSSNSTGSLNAN. A compositionally biased stretch (polar residues) spans 133–144; it reads GPSNGNPKATNQ. Residues 145 to 189 are compositionally biased toward low complexity; it reads GGSTSAMASSIASKSSSTSNSNSNSNSTTNSNGNSSNSTGSLNAN. The Proton acceptor role is filled by His369.

It belongs to the peptidase C19 family. Catalytic component of the Usp12-46 deubiquitylase complex consisting of Usp12-46, Wdr20 and Uaf1. The Usp12-46 deubiquitylase complex associates with arr/arrow; the interaction leads to deubiquitination and stabilization of arr/arrow.

The catalysed reaction is Thiol-dependent hydrolysis of ester, thioester, amide, peptide and isopeptide bonds formed by the C-terminal Gly of ubiquitin (a 76-residue protein attached to proteins as an intracellular targeting signal).. Catalytic component of the Usp12-46 deubiquitylase complex. Deubiquitylates the wg/wingless-signaling receptor arr/arrow, which stabilizes the receptor and increases its concentration at the cell surface; this enhances the sensitivity of cells to wg/wingless-signal stimulation. This increases the amplitude and spatial range of the signaling response to the wg/wingless morphogen gradient, facilitating the precise, concentration-dependent regulation of its target genes. Required for wg/wingless-mediated signaling in the wing imaginal disc and for wg/wingless-dependent regulation of adult intestinal stem cell proliferation. Negative regulator of Notch signaling, possibly by regulating lysosomal degradation of N/Notch and affecting cell surface receptor levels; this may be context and cell-type specific function involved in external sensory organ development but not in wing imaginal-disc dorsoventral boundary signaling. Protects against HTT/huntingtin-induced polyglutamine expansion-dependent neurodegeneration. The polypeptide is Ubiquitin carboxyl-terminal hydrolase 12/46 homolog (Drosophila melanogaster (Fruit fly)).